The following is a 324-amino-acid chain: MAAAAAAGANGSGGSSGMEVDAAVPSVMASGVTGSVSVALHPLVILNISDHWIRMRSQEGRPMQVIGALIGKQEGRNIEVMNSFELLSHTVEEKIIIDKEYYYTKEEQFKQVFKELEFLGWYTTGGPPDPSDIHVHKQVCEIIESPLFLKLNPMTKHTDLPVSVFESVIDIINGEATMLFAELTYTLATEEAERIGVDHVARMTATGSGENSTVAEHLIAQHSAIKMLHSRVKLILEYVKASEAGEVPFNHEILREAYALCHCLPVLSTDKFKTDFYDQCNDVGLMAYLGTITKTCNTMNQFVNKFNVLYDRQGIGRRMRGLFF.

Residues 38-171 (VALHPLVILN…VSVFESVIDI (134 aa)) enclose the MPN domain.

Belongs to the peptidase M67A family. CSN6 subfamily. Component of the CSN complex, composed of COPS1/GPS1, COPS2, COPS3, COPS4, COPS5, COPS6, COPS7 (COPS7A or COPS7B), COPS8 and COPS9. In the complex, it probably interacts directly with COPS2, COPS4, COPS5, COPS7 (COPS7A or COPS7B) and COPS9. Interacts with the translation initiation factor EIF3S6. Interacts weakly with RBX1. Directly interacts with COP1 and 14-3-3 protein sigma/SFN. Interacts with ERCC6.

It localises to the cytoplasm. Its subcellular location is the nucleus. Functionally, component of the COP9 signalosome complex (CSN), a complex involved in various cellular and developmental processes. The CSN complex is an essential regulator of the ubiquitin (Ubl) conjugation pathway by mediating the deneddylation of the cullin subunits of SCF-type E3 ligase complexes, leading to decrease the Ubl ligase activity of SCF-type complexes such as SCF, CSA or DDB2. The complex is also involved in phosphorylation of p53/TP53, c-jun/JUN, IkappaBalpha/NFKBIA, ITPK1 and IRF8, possibly via its association with CK2 and PKD kinases. CSN-dependent phosphorylation of TP53 and JUN promotes and protects degradation by the Ubl system, respectively. Has some glucocorticoid receptor-responsive activity. Stabilizes COP1 through reducing COP1 auto-ubiquitination and decelerating COP1 turnover rate, hence regulates the ubiquitination of COP1 targets, including SFN. The protein is COP9 signalosome complex subunit 6 (Cops6) of Mus musculus (Mouse).